We begin with the raw amino-acid sequence, 651 residues long: Peptidoglycan D,D-transpeptidase MrdA (651 aa).

Residues 30 to 50 (LVAFLGILLLTGVLFTNIYQL) form a helical membrane-spanning segment. S338 (acyl-ester intermediate) is an active-site residue.

The protein belongs to the transpeptidase family. MrdA subfamily.

It localises to the cell inner membrane. The catalysed reaction is Preferential cleavage: (Ac)2-L-Lys-D-Ala-|-D-Ala. Also transpeptidation of peptidyl-alanyl moieties that are N-acyl substituents of D-alanine.. Its pathway is cell wall biogenesis; peptidoglycan biosynthesis. In terms of biological role, catalyzes cross-linking of the peptidoglycan cell wall. In Haemophilus influenzae (strain ATCC 51907 / DSM 11121 / KW20 / Rd), this protein is Peptidoglycan D,D-transpeptidase MrdA.